A 601-amino-acid polypeptide reads, in one-letter code: Elongation factor 4 (601 aa).

Positions 7 to 189 (DTIRNFSIVA…AIVAKLPPPK (183 aa)) constitute a tr-type G domain. Residues 19 to 24 (DHGKST) and 136 to 139 (NKID) contribute to the GTP site.

This sequence belongs to the TRAFAC class translation factor GTPase superfamily. Classic translation factor GTPase family. LepA subfamily.

Its subcellular location is the cell inner membrane. The enzyme catalyses GTP + H2O = GDP + phosphate + H(+). Required for accurate and efficient protein synthesis under certain stress conditions. May act as a fidelity factor of the translation reaction, by catalyzing a one-codon backward translocation of tRNAs on improperly translocated ribosomes. Back-translocation proceeds from a post-translocation (POST) complex to a pre-translocation (PRE) complex, thus giving elongation factor G a second chance to translocate the tRNAs correctly. Binds to ribosomes in a GTP-dependent manner. The protein is Elongation factor 4 of Methylobacterium nodulans (strain LMG 21967 / CNCM I-2342 / ORS 2060).